The chain runs to 95 residues: Glutamyl-tRNA(Gln) amidotransferase subunit C (95 aa).

Belongs to the GatC family. In terms of assembly, heterotrimer of A, B and C subunits.

The catalysed reaction is L-glutamyl-tRNA(Gln) + L-glutamine + ATP + H2O = L-glutaminyl-tRNA(Gln) + L-glutamate + ADP + phosphate + H(+). It carries out the reaction L-aspartyl-tRNA(Asn) + L-glutamine + ATP + H2O = L-asparaginyl-tRNA(Asn) + L-glutamate + ADP + phosphate + 2 H(+). Allows the formation of correctly charged Asn-tRNA(Asn) or Gln-tRNA(Gln) through the transamidation of misacylated Asp-tRNA(Asn) or Glu-tRNA(Gln) in organisms which lack either or both of asparaginyl-tRNA or glutaminyl-tRNA synthetases. The reaction takes place in the presence of glutamine and ATP through an activated phospho-Asp-tRNA(Asn) or phospho-Glu-tRNA(Gln). The sequence is that of Glutamyl-tRNA(Gln) amidotransferase subunit C from Mesorhizobium japonicum (strain LMG 29417 / CECT 9101 / MAFF 303099) (Mesorhizobium loti (strain MAFF 303099)).